The chain runs to 213 residues: Protein-L-isoaspartate O-methyltransferase 1 (213 aa).

Ser-64 is an active-site residue.

Belongs to the methyltransferase superfamily. L-isoaspartyl/D-aspartyl protein methyltransferase family.

The protein resides in the cytoplasm. The catalysed reaction is [protein]-L-isoaspartate + S-adenosyl-L-methionine = [protein]-L-isoaspartate alpha-methyl ester + S-adenosyl-L-homocysteine. Catalyzes the methyl esterification of L-isoaspartyl residues in peptides and proteins that result from spontaneous decomposition of normal L-aspartyl and L-asparaginyl residues. It plays a role in the repair and/or degradation of damaged proteins. In Nitrosococcus oceani (strain ATCC 19707 / BCRC 17464 / JCM 30415 / NCIMB 11848 / C-107), this protein is Protein-L-isoaspartate O-methyltransferase 1.